A 591-amino-acid chain; its full sequence is Protein CBFA2T3 (591 aa).

A disordered region spans residues 1–105 (MPGGTPRLEG…SSSASLSTHQ (105 aa)). The interval 1-381 (MPGGTPRLEG…ADREELNHWI (381 aa)) is mediates localization to the nucleus. The span at 41-52 (STPPNMPPPPPA) shows a compositional bias: pro residues. Polar residues predominate over residues 55–105 (QGATRHPSFTPSTMMNGSSHSPTAINGAPSTPNGFSNGPATSSSASLSTHQ). A TAFH domain is found at 112 to 207 (ARQLSKLKRF…SPAQYLAQHE (96 aa)). Disordered stretches follow at residues 226 to 291 (LEVS…PPQH) and 386 to 420 (DAEDMKKGSPPSARPHNSSSSSEAPQLDVHRDFAP). The span at 230-256 (ESGKRRTPDRTKENGLDRDPLHPEHLS) shows a compositional bias: basic and acidic residues. The segment covering 263 to 274 (SPAQRYSPSNGL) has biased composition (polar residues). Over residues 279–290 (NGLPHPPGPPPQ) the composition is skewed to pro residues. Low complexity predominate over residues 394-410 (SPPSARPHNSSSSSEAP). The stretch at 433-488 (RKAEEAVNEVKRQAMSELQKAVSDAERKAHELITTERAKMERALAEAKRQASEDAL) forms a coiled coil. Zn(2+)-binding residues include Cys501, Cys504, Cys512, Cys515, Cys521, Cys525, His533, and Cys537. The MYND-type zinc-finger motif lies at 501-537 (CWNCGRKASETCSGCNTARYCGSFCQHKDWEKHHHVC). A disordered region spans residues 548–591 (SVPTAVGQPEAVPPMASSPSDAGSAGASRAGTPGTPAPLESASR). Residues 560–585 (PPMASSPSDAGSAGASRAGTPGTPAP) show a composition bias toward low complexity.

The protein belongs to the CBFA2T family.

The protein localises to the nucleus. It is found in the nucleolus. It localises to the nucleoplasm. The protein resides in the golgi apparatus. Its function is as follows. Functions as a transcriptional repressor. Regulates the proliferation and the differentiation of erythroid progenitors. Plays a role in granulocyte differentiation. May also function as an A-kinase-anchoring protein. This chain is Protein CBFA2T3 (CBFA2T3), found in Gallus gallus (Chicken).